Consider the following 406-residue polypeptide: Mitochondrial ribosome-associated GTPase 2 (406 aa).

The localized in the mitochondria stretch occupies residues 15–406 (FQGVGHWALS…LGQGRQPLRW (392 aa)). Positions 30–406 (KPSRLLPQRA…LGQGRQPLRW (377 aa)) are not localized in the mitochondria. Positions 70–224 (RYFVDYRRVL…RVLHLELKTV (155 aa)) constitute an Obg domain. The OBG-type G domain occupies 225–390 (AHAGMVGFPN…LLLHLKVLYD (166 aa)). Residues 231–238 (GFPNAGKS), 256–260 (FTTLK), 278–281 (DIPG), 345–348 (NKID), and 371–373 (SAL) each bind GTP. 2 residues coordinate Mg(2+): Ser238 and Thr258.

The protein belongs to the TRAFAC class OBG-HflX-like GTPase superfamily. OBG GTPase family. In terms of assembly, associates with the mitochondrial ribosome large subunit; the association occurs in a GTP-dependent manner. Mg(2+) is required as a cofactor.

It is found in the mitochondrion. Its subcellular location is the mitochondrion inner membrane. In terms of biological role, plays a role in the regulation of the mitochondrial ribosome assembly and of translational activity. Displays GTPase activity. Involved in the ribosome maturation process. The protein is Mitochondrial ribosome-associated GTPase 2 (MTG2) of Homo sapiens (Human).